We begin with the raw amino-acid sequence, 128 residues long: Large-conductance mechanosensitive channel (128 aa).

The next 2 helical transmembrane spans lie at 11 to 31 and 70 to 90; these read FALK…AAFG and GAFI…FIFV.

The protein belongs to the MscL family. Homopentamer.

The protein localises to the cell membrane. Its function is as follows. Channel that opens in response to stretch forces in the membrane lipid bilayer. May participate in the regulation of osmotic pressure changes within the cell. The polypeptide is Large-conductance mechanosensitive channel (Listeria monocytogenes serotype 4b (strain CLIP80459)).